A 295-amino-acid polypeptide reads, in one-letter code: Ribosomal protein L11 methyltransferase (295 aa).

Residues Thr146, Gly167, Asp189, and Asn231 each contribute to the S-adenosyl-L-methionine site.

It belongs to the methyltransferase superfamily. PrmA family.

It is found in the cytoplasm. It catalyses the reaction L-lysyl-[protein] + 3 S-adenosyl-L-methionine = N(6),N(6),N(6)-trimethyl-L-lysyl-[protein] + 3 S-adenosyl-L-homocysteine + 3 H(+). Functionally, methylates ribosomal protein L11. The protein is Ribosomal protein L11 methyltransferase of Vibrio campbellii (strain ATCC BAA-1116).